A 544-amino-acid chain; its full sequence is Ribosomal protein S6 kinase-like 1 (544 aa).

The 29-residue stretch at 87-115 folds into the MIT domain; the sequence is VHVDPNKERREAVKLKITKYLRRAEEIFN. Residues 145–534 enclose the Protein kinase domain; the sequence is SALEQLKGCR…TSRLKSHPFF (390 aa). Residues 151–159 and Lys177 contribute to the ATP site; that span reads KGCRVVGII. 2 disordered regions span residues 262–344 and 353–372; these read PAEL…HWVR and AYGRGRGRNPPSANRASLGS. The span at 303 to 313 shows a compositional bias: polar residues; sequence SRPSAVFSSDP. Asp407 serves as the catalytic Proton acceptor.

The protein belongs to the protein kinase superfamily. Ser/Thr protein kinase family. S6 kinase subfamily.

It carries out the reaction L-seryl-[protein] + ATP = O-phospho-L-seryl-[protein] + ADP + H(+). The enzyme catalyses L-threonyl-[protein] + ATP = O-phospho-L-threonyl-[protein] + ADP + H(+). This is Ribosomal protein S6 kinase-like 1 (Rps6kl1) from Mus musculus (Mouse).